A 172-amino-acid polypeptide reads, in one-letter code: Shikimate kinase (172 aa).

11–16 (GAGKST) is an ATP binding site. Ser15 contributes to the Mg(2+) binding site. Residues Asp33, Arg57, and Gly79 each coordinate substrate. Arg117 is an ATP binding site. Residue Arg136 coordinates substrate. Arg153 lines the ATP pocket.

The protein belongs to the shikimate kinase family. As to quaternary structure, monomer. Mg(2+) serves as cofactor.

It localises to the cytoplasm. It carries out the reaction shikimate + ATP = 3-phosphoshikimate + ADP + H(+). The protein operates within metabolic intermediate biosynthesis; chorismate biosynthesis; chorismate from D-erythrose 4-phosphate and phosphoenolpyruvate: step 5/7. In terms of biological role, catalyzes the specific phosphorylation of the 3-hydroxyl group of shikimic acid using ATP as a cosubstrate. This Pseudomonas savastanoi pv. phaseolicola (strain 1448A / Race 6) (Pseudomonas syringae pv. phaseolicola (strain 1448A / Race 6)) protein is Shikimate kinase.